The chain runs to 382 residues: 8-amino-7-oxononanoate synthase (382 aa).

Position 26 (Arg-26) interacts with substrate. 104 to 105 (GY) contributes to the pyridoxal 5'-phosphate binding site. His-129 contributes to the substrate binding site. Pyridoxal 5'-phosphate is bound by residues Ser-175, 200-203 (DEAH), and 232-235 (TLSK). Position 235 is an N6-(pyridoxal phosphate)lysine (Lys-235). Residue Thr-345 participates in substrate binding.

This sequence belongs to the class-II pyridoxal-phosphate-dependent aminotransferase family. BioF subfamily. Homodimer. The cofactor is pyridoxal 5'-phosphate.

It catalyses the reaction 6-carboxyhexanoyl-[ACP] + L-alanine + H(+) = (8S)-8-amino-7-oxononanoate + holo-[ACP] + CO2. It participates in cofactor biosynthesis; biotin biosynthesis. In terms of biological role, catalyzes the decarboxylative condensation of pimeloyl-[acyl-carrier protein] and L-alanine to produce 8-amino-7-oxononanoate (AON), [acyl-carrier protein], and carbon dioxide. The protein is 8-amino-7-oxononanoate synthase of Mycobacterium sp. (strain KMS).